We begin with the raw amino-acid sequence, 185 residues long: Protein LURP-one-related 13 (185 aa).

It belongs to the LOR family.

Functionally, might be related to the phospholipid scramblase and tubby-like superfamily of membrane tethered transcription factors. This chain is Protein LURP-one-related 13, found in Arabidopsis thaliana (Mouse-ear cress).